Reading from the N-terminus, the 472-residue chain is DNA-cytosine methyltransferase (472 aa).

The SAM-dependent MTase C5-type domain maps to 87–457 (FRFIDLFAGI…KLLEPKIKQA (371 aa)). Residue Cys177 is part of the active site.

The protein belongs to the class I-like SAM-binding methyltransferase superfamily. C5-methyltransferase family.

It catalyses the reaction a 2'-deoxycytidine in DNA + S-adenosyl-L-methionine = a 5-methyl-2'-deoxycytidine in DNA + S-adenosyl-L-homocysteine + H(+). Functionally, this methylase recognizes the double-stranded sequence 5'-CCWGG-3', methylates C-2 on both strands. The polypeptide is DNA-cytosine methyltransferase (dcm) (Escherichia coli O157:H7).